We begin with the raw amino-acid sequence, 313 residues long: Porphobilinogen deaminase (313 aa).

Residue Cys242 is modified to S-(dipyrrolylmethanemethyl)cysteine.

Belongs to the HMBS family. In terms of assembly, monomer. Requires dipyrromethane as cofactor.

It catalyses the reaction 4 porphobilinogen + H2O = hydroxymethylbilane + 4 NH4(+). It participates in porphyrin-containing compound metabolism; protoporphyrin-IX biosynthesis; coproporphyrinogen-III from 5-aminolevulinate: step 2/4. In terms of biological role, tetrapolymerization of the monopyrrole PBG into the hydroxymethylbilane pre-uroporphyrinogen in several discrete steps. This chain is Porphobilinogen deaminase, found in Proteus mirabilis (strain HI4320).